Here is a 67-residue protein sequence, read N- to C-terminus: Bowman-Birk type major trypsin inhibitor (67 aa).

Disulfide bonds link cysteine 8–cysteine 63, cysteine 9–cysteine 24, cysteine 14–cysteine 22, cysteine 31–cysteine 38, and cysteine 35–cysteine 51.

It belongs to the Bowman-Birk serine protease inhibitor family.

This chain is Bowman-Birk type major trypsin inhibitor, found in Setaria italica (Foxtail millet).